Reading from the N-terminus, the 694-residue chain is Elongation factor G (694 aa).

The region spanning 10–285 (EKTRNIGIMA…GVVDYLPSPL (276 aa)) is the tr-type G domain. GTP is bound by residues 19–26 (AHIDAGKT), 83–87 (DTPGH), and 137–140 (NKMD).

It belongs to the TRAFAC class translation factor GTPase superfamily. Classic translation factor GTPase family. EF-G/EF-2 subfamily.

The protein resides in the cytoplasm. In terms of biological role, catalyzes the GTP-dependent ribosomal translocation step during translation elongation. During this step, the ribosome changes from the pre-translocational (PRE) to the post-translocational (POST) state as the newly formed A-site-bound peptidyl-tRNA and P-site-bound deacylated tRNA move to the P and E sites, respectively. Catalyzes the coordinated movement of the two tRNA molecules, the mRNA and conformational changes in the ribosome. The sequence is that of Elongation factor G from Lactobacillus delbrueckii subsp. bulgaricus (strain ATCC 11842 / DSM 20081 / BCRC 10696 / JCM 1002 / NBRC 13953 / NCIMB 11778 / NCTC 12712 / WDCM 00102 / Lb 14).